We begin with the raw amino-acid sequence, 434 residues long: MYKGFDRSVSLYRQACKVIPGGVNSPVRAFKAVGLNPVFVKKGEGARIYDFDDNEYIDYVCSWGPLILGHRHPRVVGALERCLNEVGTSFGAPTELENILAEMIVEAVPSIEMVRLVNSGTEAAMSALRLARGYTGRNKIVKFEGCYHGHADFLLIKAGSGALTFGVPTSPGIPAAAAAGTIVARYNDLAGLEEIFKLEGEDIAAVIVEPVAGNMGVVPPAPGFLEGLRNLTARYGSLLIFDEVITGFRLAYGGAQELYGVAPDLTCLGKVIGGGLPVGAYGGRREIMEQVAPSGPVYQAGTLSGNPLAVSAGIATLEVLKQPGVYGRLEQTAAALEDALKQAARQTGAEVCFNRAGSMLCAFFTGEEVKDYASACTSDTARYAAFFRSMLEQGVYLAPSQFEAAFVSLAHGKEEIERTAEAARHAFKAAVEQK.

Lys-270 is modified (N6-(pyridoxal phosphate)lysine).

The protein belongs to the class-III pyridoxal-phosphate-dependent aminotransferase family. HemL subfamily. In terms of assembly, homodimer. The cofactor is pyridoxal 5'-phosphate.

The protein localises to the cytoplasm. It carries out the reaction (S)-4-amino-5-oxopentanoate = 5-aminolevulinate. It participates in porphyrin-containing compound metabolism; protoporphyrin-IX biosynthesis; 5-aminolevulinate from L-glutamyl-tRNA(Glu): step 2/2. In Pelotomaculum thermopropionicum (strain DSM 13744 / JCM 10971 / SI), this protein is Glutamate-1-semialdehyde 2,1-aminomutase.